Consider the following 1038-residue polypeptide: Ubiquitin carboxyl-terminal hydrolase 36 (1038 aa).

Disordered stretches follow at residues 22-44 and 107-148; these read LGGNSSAGSSTDQAKSGEDTNGS and ANGH…PKPK. Polar residues predominate over residues 23-44; sequence GGNSSAGSSTDQAKSGEDTNGS. Residues 172 to 480 enclose the USP domain; sequence TGMINVGNTC…NAYIMFFELD (309 aa). The active-site Nucleophile is cysteine 181. The Proton acceptor role is filled by histidine 439. 4 disordered regions span residues 487-794, 818-881, 912-985, and 1000-1038; these read PAAN…SKTG, GSPV…SNGS, LLVD…YNQN, and RFGGPGSAKFQQQRALQRHLSAGGGFSRRQPSAQQQQQT. Composition is skewed to low complexity over residues 502–517, 546–559, and 587–606; these read STTPVPAATVSSPSPT, QQNQQSPQNGLQLG, and NGNKSSSPSSNSSSNHKSIN. Serine 513 and serine 515 each carry phosphoserine. Residues 629-641 show a composition bias toward polar residues; sequence TTAQLPSMPNMTE. A phosphothreonine mark is found at threonine 658 and threonine 662. A phosphoserine mark is found at serine 672 and serine 674. Over residues 703 to 728 the composition is skewed to polar residues; that stretch reads TNGHSKTNGSHTNGSASSSVHVNNSK. Over residues 729 to 746 the composition is skewed to basic and acidic residues; that stretch reads QKTDAIDEIFKSLKKSAD. Serine 747 is modified (phosphoserine). Residues 747–756 are compositionally biased toward acidic residues; that stretch reads SDEDDDEEEP. The segment covering 766-776 has biased composition (low complexity); the sequence is PQKQSQSQSKA. Positions 777–786 are enriched in pro residues; the sequence is PPSPKTPPSP. Serine 779 carries the phosphoserine modification. At threonine 782 the chain carries Phosphothreonine. Phosphoserine occurs at positions 785 and 819. Residue threonine 825 is modified to Phosphothreonine. Polar residues predominate over residues 832–844; it reads NPFSSSKPSTDSP. Serine 843 is modified (phosphoserine). Threonine 846 carries the phosphothreonine modification. A compositionally biased stretch (polar residues) spans 859-881; that stretch reads ALKSHQQPRVGNGYQSNATSNGS. The segment covering 912–923 has biased composition (basic and acidic residues); that stretch reads LLVDAREQRQRD. Residues 942-953 show a composition bias toward low complexity; that stretch reads SGSAKGNNASNS.

The protein belongs to the peptidase C19 family. As to quaternary structure, interacts with atms/PAF1, but not with CycT. Interacts (via C-terminus) with imd (via N-terminus).

It is found in the nucleus. It localises to the nucleolus. Its subcellular location is the cytoplasm. The catalysed reaction is Thiol-dependent hydrolysis of ester, thioester, amide, peptide and isopeptide bonds formed by the C-terminal Gly of ubiquitin (a 76-residue protein attached to proteins as an intracellular targeting signal).. Hydrolase that deubiquitinates polyubiquitinated target proteins including imd. Required for preventing the constitutive activation of the imd/NF-kappa-B (Imd) signaling cascade under unchalleneged conditions. Deubiquitinates imd linked 'Lys-63' chains which leads its proteasomal degradation and consequently down-regulation of the Imd signaling cascade. Removal of the activating 'Lys-63'-linked chains is likely to enable their replacement with 'Lys-48'-linked chains which act as 'tags' the for proteasomal degradation of imd. Required for maintaining multiple types of adult stem cells, including male and female germline, epithelial follicle cell and intestinal stem cells. May function as a transcriptional repressor by continually deubiquiting histone H2B at the promoters of genes critical for cellular differentiation, thereby preventing histone H3 'Lys-4' trimethylation (H3K4me3). Controls selective autophagy activation by ubiquitinated proteins. The sequence is that of Ubiquitin carboxyl-terminal hydrolase 36 (scny) from Drosophila melanogaster (Fruit fly).